The primary structure comprises 147 residues: Hemoglobin subunit beta-1 (147 aa).

V2 is modified (N-acetylvaline). One can recognise a Globin domain in the interval 3–147; that stretch reads HLTDAEKAAV…VATALAHKYH (145 aa). Residue K18 is modified to N6-succinyllysine. Phosphoserine occurs at positions 21, 45, and 51. An N6-succinyllysine modification is found at K60. Residues H64 and H93 each coordinate heme b. R105 is subject to Asymmetric dimethylarginine. The residue at position 124 (T124) is a Phosphothreonine.

Belongs to the globin family. As to quaternary structure, heterotetramer of two alpha chains and two beta chains. In terms of tissue distribution, red blood cells.

Involved in oxygen transport from the lung to the various peripheral tissues. This chain is Hemoglobin subunit beta-1 (Hbb-b1), found in Mus musculus (Mouse).